The sequence spans 170 residues: Peptide methionine sulfoxide reductase MsrA (170 aa).

Residue Cys-13 is part of the active site.

This sequence belongs to the MsrA Met sulfoxide reductase family.

It carries out the reaction L-methionyl-[protein] + [thioredoxin]-disulfide + H2O = L-methionyl-(S)-S-oxide-[protein] + [thioredoxin]-dithiol. The enzyme catalyses [thioredoxin]-disulfide + L-methionine + H2O = L-methionine (S)-S-oxide + [thioredoxin]-dithiol. Has an important function as a repair enzyme for proteins that have been inactivated by oxidation. Catalyzes the reversible oxidation-reduction of methionine sulfoxide in proteins to methionine. The polypeptide is Peptide methionine sulfoxide reductase MsrA (Nocardia farcinica (strain IFM 10152)).